Here is a 316-residue protein sequence, read N- to C-terminus: Tetrahydromethanopterin S-methyltransferase subunit H (316 aa).

It belongs to the MtrH family. The complex is composed of 8 subunits; MtrA, MtrB, MtrC, MtrD, MtrE, MtrF, MtrG and MtrH.

It catalyses the reaction 5-methyl-5,6,7,8-tetrahydromethanopterin + coenzyme M + 2 Na(+)(in) = 5,6,7,8-tetrahydromethanopterin + methyl-coenzyme M + 2 Na(+)(out). It functions in the pathway one-carbon metabolism; methanogenesis from CO(2); methyl-coenzyme M from 5,10-methylene-5,6,7,8-tetrahydromethanopterin: step 2/2. Its function is as follows. Part of a complex that catalyzes the formation of methyl-coenzyme M and tetrahydromethanopterin from coenzyme M and methyl-tetrahydromethanopterin. This is an energy-conserving, sodium-ion translocating step. MtrH catalyzes the transfer of the methyl group from methyl-tetrahydromethanopterin to the corrinoid prosthetic group of MtrA. The sequence is that of Tetrahydromethanopterin S-methyltransferase subunit H from Methanosarcina barkeri (strain Fusaro / DSM 804).